The following is a 115-amino-acid chain: Protein translation factor SUI1 homolog (115 aa).

The protein belongs to the SUI1 family. Expressed in all tissues examined.

Probably involved in translation. The protein is Protein translation factor SUI1 homolog (GOS2) of Oryza sativa subsp. indica (Rice).